Here is a 96-residue protein sequence, read N- to C-terminus: Large ribosomal subunit protein bL27 (96 aa).

The propeptide occupies 1 to 9 (MLRLDLQFF).

The protein belongs to the bacterial ribosomal protein bL27 family. Post-translationally, the N-terminus is cleaved by ribosomal processing cysteine protease Prp.

This is Large ribosomal subunit protein bL27 from Anoxybacillus flavithermus (strain DSM 21510 / WK1).